The sequence spans 278 residues: Indole-3-glycerol phosphate synthase (278 aa).

It belongs to the TrpC family.

It carries out the reaction 1-(2-carboxyphenylamino)-1-deoxy-D-ribulose 5-phosphate + H(+) = (1S,2R)-1-C-(indol-3-yl)glycerol 3-phosphate + CO2 + H2O. It participates in amino-acid biosynthesis; L-tryptophan biosynthesis; L-tryptophan from chorismate: step 4/5. The polypeptide is Indole-3-glycerol phosphate synthase (Pseudomonas aeruginosa (strain LESB58)).